Here is a 417-residue protein sequence, read N- to C-terminus: Phosphoglycerate kinase 2 (417 aa).

Position 2 is an N-acetylserine (serine 2). Residues serine 2 and serine 4 each carry the phosphoserine modification. Lysine 11 carries the N6-acetyllysine modification. Residues valine 23, aspartate 24, phenylalanine 25, asparagine 26, glutamine 38, arginine 39, serine 62, histidine 63, glycine 65, and arginine 66 each contribute to the (2R)-3-phosphoglycerate site. 3 positions are modified to N6-acetyllysine: lysine 75, lysine 86, and lysine 97. (2R)-3-phosphoglycerate contacts are provided by leucine 122 and arginine 123. An N6-acetyllysine mark is found at lysine 131 and lysine 146. Positions 170 and 171 each coordinate (2R)-3-phosphoglycerate. Tyrosine 196 bears the Phosphotyrosine mark. The residue at position 199 (lysine 199) is an N6-acetyllysine. Glycine 214 is a binding site for ADP. Glycine 214 contacts CDP. Residues alanine 215 and lysine 216 each contribute to the AMP site. Alanine 215 is a binding site for ATP. Alanine 215 is a binding site for Mg(2+). Residues alanine 218 and aspartate 219 each coordinate Mg(2+). Aspartate 219 is a binding site for CDP. Lysine 220 contacts AMP. Lysine 220 is a binding site for ATP. Glycine 238 contributes to the ADP binding site. CDP is bound at residue glycine 238. Position 239 (glycine 239) interacts with AMP. Residue glycine 239 participates in ATP binding. 2 positions are modified to N6-acetyllysine: lysine 267 and lysine 291. Alanine 313 provides a ligand contact to AMP. Alanine 313 contributes to the ATP binding site. The CDP site is built by glycine 338 and phenylalanine 343. Phenylalanine 343 contacts ADP. Glutamate 344 contacts AMP. Glutamate 344, aspartate 375, and threonine 376 together coordinate ATP. Aspartate 375 contributes to the Mg(2+) binding site.

The protein belongs to the phosphoglycerate kinase family. Monomer. Mg(2+) serves as cofactor. As to expression, testis specific.

It localises to the cytoplasm. It catalyses the reaction (2R)-3-phosphoglycerate + ATP = (2R)-3-phospho-glyceroyl phosphate + ADP. Its pathway is carbohydrate degradation; glycolysis; pyruvate from D-glyceraldehyde 3-phosphate: step 2/5. Functionally, essential for sperm motility and male fertility but is not required for the completion of spermatogenesis. This chain is Phosphoglycerate kinase 2, found in Sus scrofa (Pig).